Consider the following 391-residue polypeptide: Xylose isomerase (391 aa).

Catalysis depends on residues His-54 and Asp-57. Positions 181, 217, 220, 245, 255, 257, and 287 each coordinate Mg(2+).

It belongs to the xylose isomerase family. As to quaternary structure, homotetramer. It depends on Mg(2+) as a cofactor.

The protein resides in the cytoplasm. It catalyses the reaction alpha-D-xylose = alpha-D-xylulofuranose. Involved in D-xylose catabolism. This is Xylose isomerase (xylA) from Streptomyces albus G.